A 374-amino-acid polypeptide reads, in one-letter code: Trehalose-phosphate phosphatase B (374 aa).

This sequence belongs to the trehalose phosphatase family. A divalent metal cation serves as cofactor. In terms of tissue distribution, expressed in flowers.

The enzyme catalyses alpha,alpha-trehalose 6-phosphate + H2O = alpha,alpha-trehalose + phosphate. It functions in the pathway glycan biosynthesis; trehalose biosynthesis. Its function is as follows. Removes the phosphate from trehalose 6-phosphate to produce free trehalose. Trehalose accumulation in plant may improve abiotic stress tolerance. The polypeptide is Trehalose-phosphate phosphatase B (TPPB) (Arabidopsis thaliana (Mouse-ear cress)).